A 186-amino-acid chain; its full sequence is ADP-ribosylation factor-like protein 8A (186 aa).

An intramembrane region (note=Mediates targeting to membranes) is located at residues 1 to 19 (MIALFNKLLDWFKALFWKE). GTP contacts are provided by residues 29–35 (QYSGKTT), 71–75 (DIGGQ), and 130–133 (NKRD).

This sequence belongs to the small GTPase superfamily. Arf family. Interacts with PLEKHM1. When GTP-bound, interacts with RUFY3 and RUFY4, but not with RUFY1, nor RUFY2. Ubiquitously expressed.

It is found in the late endosome membrane. The protein localises to the lysosome membrane. It localises to the cytoplasm. The protein resides in the cytoskeleton. Its subcellular location is the spindle. It is found in the cell projection. The protein localises to the axon. It localises to the synapse. Its function is as follows. Plays a role in lysosome motility. In neurons, mediates the anterograde axonal long-range transport of presynaptic lysosome-related vesicles required for presynaptic biogenesis and synaptic function. May play a role in chromosome segregation. The polypeptide is ADP-ribosylation factor-like protein 8A (ARL8A) (Homo sapiens (Human)).